The chain runs to 538 residues: Putative cysteine ligase BshC (538 aa).

Positions 460–484 (KINEQIELLERMLKRNVEKKHEVEL) form a coiled coil.

The protein belongs to the BshC family.

Involved in bacillithiol (BSH) biosynthesis. May catalyze the last step of the pathway, the addition of cysteine to glucosamine malate (GlcN-Mal) to generate BSH. The sequence is that of Putative cysteine ligase BshC from Bacillus thuringiensis subsp. konkukian (strain 97-27).